The following is a 520-amino-acid chain: 2-isopropylmalate synthase (520 aa).

Residues 12 to 274 (IRIFDTTLRD…DSAINTPRIV (263 aa)) enclose the Pyruvate carboxyltransferase domain. Residues D21, H209, H211, and N245 each contribute to the Mn(2+) site. The interval 396-520 (RLASMTISDV…VIAGKTAAVA (125 aa)) is regulatory domain.

This sequence belongs to the alpha-IPM synthase/homocitrate synthase family. LeuA type 1 subfamily. Homodimer. It depends on Mn(2+) as a cofactor.

It is found in the cytoplasm. It catalyses the reaction 3-methyl-2-oxobutanoate + acetyl-CoA + H2O = (2S)-2-isopropylmalate + CoA + H(+). The protein operates within amino-acid biosynthesis; L-leucine biosynthesis; L-leucine from 3-methyl-2-oxobutanoate: step 1/4. In terms of biological role, catalyzes the condensation of the acetyl group of acetyl-CoA with 3-methyl-2-oxobutanoate (2-ketoisovalerate) to form 3-carboxy-3-hydroxy-4-methylpentanoate (2-isopropylmalate). In Xanthomonas oryzae pv. oryzae (strain MAFF 311018), this protein is 2-isopropylmalate synthase.